The following is a 413-amino-acid chain: Glucose-1-phosphate adenylyltransferase (413 aa).

Alpha-D-glucose 1-phosphate contacts are provided by residues glycine 163, 179-180 (EK), and serine 197.

Belongs to the bacterial/plant glucose-1-phosphate adenylyltransferase family. In terms of assembly, homotetramer.

It catalyses the reaction alpha-D-glucose 1-phosphate + ATP + H(+) = ADP-alpha-D-glucose + diphosphate. It functions in the pathway glycan biosynthesis; glycogen biosynthesis. Functionally, involved in the biosynthesis of ADP-glucose, a building block required for the elongation reactions to produce glycogen. Catalyzes the reaction between ATP and alpha-D-glucose 1-phosphate (G1P) to produce pyrophosphate and ADP-Glc. This is Glucose-1-phosphate adenylyltransferase from Parafrankia sp. (strain EAN1pec).